The following is a 150-amino-acid chain: uncharacterized protein (150 aa).

The N-terminal stretch at 1-21 (MAMEMAMMGLLGTVVGASAMG) is a signal peptide.

This is an uncharacterized protein from Mycobacterium tuberculosis (strain CDC 1551 / Oshkosh).